The following is a 381-amino-acid chain: Mannitol-1-phosphate 5-dehydrogenase (381 aa).

Residue 3–14 (AVHFGAGNIGRG) coordinates NAD(+).

The protein belongs to the mannitol dehydrogenase family.

The catalysed reaction is D-mannitol 1-phosphate + NAD(+) = beta-D-fructose 6-phosphate + NADH + H(+). The sequence is that of Mannitol-1-phosphate 5-dehydrogenase from Exiguobacterium sibiricum (strain DSM 17290 / CCUG 55495 / CIP 109462 / JCM 13490 / 255-15).